The sequence spans 485 residues: Glycogen synthase (485 aa).

Lys-21 lines the ADP-alpha-D-glucose pocket.

The protein belongs to the glycosyltransferase 1 family. Bacterial/plant glycogen synthase subfamily.

The catalysed reaction is [(1-&gt;4)-alpha-D-glucosyl](n) + ADP-alpha-D-glucose = [(1-&gt;4)-alpha-D-glucosyl](n+1) + ADP + H(+). The protein operates within glycan biosynthesis; glycogen biosynthesis. Its function is as follows. Synthesizes alpha-1,4-glucan chains using ADP-glucose. This chain is Glycogen synthase, found in Pseudomonas syringae pv. syringae (strain B728a).